The sequence spans 463 residues: Histone acetyltransferase mst1 (463 aa).

The region spanning 22–74 (VYKSKVFAFKDGEYRKAEILMIQKRTRGVVYYVHYNDYNKRLDEWITIDNIDL) is the Tudor-knot domain. The interval 76-145 (KGIEYPPPEK…GSNAGNESLP (70 aa)) is disordered. Residues 87–99 (KKAHGKGKSSKRP) are compositionally biased toward basic residues. Residues 111–121 (PSKTEPSTPST) show a composition bias toward low complexity. The MYST-type HAT domain occupies 179-451 (ARIRNINKIC…NGDLLADWQP (273 aa)). Residues 212–237 (VYICSFCFCYYGSERQFQRHREKCTL) form a C2HC MYST-type zinc finger. An ESA1-RPD3 motif motif is present at residues 262 to 283 (RTWCRNICLLSKLFLDHKMLYY). Lys-279 is modified (N6-acetyllysine; by autocatalysis). Acetyl-CoA contacts are provided by residues 320 to 324 (ACILT) and 329 to 335 (QRHGYGK). The Proton donor/acceptor role is filled by Glu-355. Ser-359 serves as a coordination point for acetyl-CoA.

Belongs to the MYST (SAS/MOZ) family. Component of the NuA4 histone acetyltransferase complex. Interacts with arp4. Post-translationally, autoacetylation at Lys-279 is required for proper function.

Its subcellular location is the nucleus. It localises to the chromosome. The enzyme catalyses L-lysyl-[histone] + acetyl-CoA = N(6)-acetyl-L-lysyl-[histone] + CoA + H(+). The catalysed reaction is L-lysyl-[protein] + acetyl-CoA = N(6)-acetyl-L-lysyl-[protein] + CoA + H(+). It catalyses the reaction 2-hydroxyisobutanoyl-CoA + L-lysyl-[protein] = N(6)-(2-hydroxyisobutanoyl)-L-lysyl-[protein] + CoA + H(+). It carries out the reaction (2E)-butenoyl-CoA + L-lysyl-[protein] = N(6)-(2E)-butenoyl-L-lysyl-[protein] + CoA + H(+). Its function is as follows. Catalytic component of the NuA4 histone acetyltransferase (HAT) complex which is involved in epigenetic transcriptional activation of selected genes principally by acetylation of nucleosomal histones H4, H3, H2B, H2A and H2A variant H2A.Z. Acetylates histone H4 to form H4K5ac, H4K8ac, H4K12ac and H4K16ac, histone H3 to form H3K14ac, and histone H2A to form H2AK4ac and H2AK7ac. The NuA4 complex is involved in the DNA damage response and is required for chromosome segregation. The NuA4 complex plays a direct role in repair of DNA double-strand breaks (DSBs) through homologous recombination. Recruitment to promoters depends on H3K4me. Also acetylates non-histone proteins. In addition to protein acetyltransferase, can use different acyl-CoA substrates, such as 2-hydroxyisobutanoyl-CoA (2-hydroxyisobutyryl-CoA) or (2E)-butenoyl-CoA (crotonyl-CoA), and is able to mediate protein 2-hydroxyisobutyrylation and crotonylation, respectively. This chain is Histone acetyltransferase mst1, found in Schizosaccharomyces pombe (strain 972 / ATCC 24843) (Fission yeast).